The chain runs to 275 residues: Dermonecrotic toxin LhSicTox-alphaVI1ii (275 aa).

The active site involves H5. E25 and D27 together coordinate Mg(2+). H41 (nucleophile) is an active-site residue. Cystine bridges form between C45/C51 and C47/C192. D85 contacts Mg(2+).

Belongs to the arthropod phospholipase D family. Class II subfamily. It depends on Mg(2+) as a cofactor. In terms of tissue distribution, expressed by the venom gland.

The protein resides in the secreted. The enzyme catalyses an N-(acyl)-sphingosylphosphocholine = an N-(acyl)-sphingosyl-1,3-cyclic phosphate + choline. It carries out the reaction an N-(acyl)-sphingosylphosphoethanolamine = an N-(acyl)-sphingosyl-1,3-cyclic phosphate + ethanolamine. It catalyses the reaction a 1-acyl-sn-glycero-3-phosphocholine = a 1-acyl-sn-glycero-2,3-cyclic phosphate + choline. The catalysed reaction is a 1-acyl-sn-glycero-3-phosphoethanolamine = a 1-acyl-sn-glycero-2,3-cyclic phosphate + ethanolamine. Functionally, dermonecrotic toxins cleave the phosphodiester linkage between the phosphate and headgroup of certain phospholipids (sphingolipid and lysolipid substrates), forming an alcohol (often choline) and a cyclic phosphate. This toxin acts on sphingomyelin (SM). It may also act on ceramide phosphoethanolamine (CPE), lysophosphatidylcholine (LPC) and lysophosphatidylethanolamine (LPE), but not on lysophosphatidylserine (LPS), and lysophosphatidylglycerol (LPG). It acts by transphosphatidylation, releasing exclusively cyclic phosphate products as second products. Induces dermonecrosis, hemolysis, increased vascular permeability, edema, inflammatory response, and platelet aggregation. This Loxosceles hirsuta (Recluse spider) protein is Dermonecrotic toxin LhSicTox-alphaVI1ii.